The following is an 816-amino-acid chain: MGEGAGDRVLSRLHSVRERIGDSLSAHPNELVAVFTRLKNLGKGMLQPHQIIAEYNNAIPEAEREKLKDGAFEDVLRAAQEAIVIPPWVALAIRPRPGVWEYVRVNVSELAVEELRVPEYLQFKEQLVEEGPNNNFVLELDFEPFNASFPRPSLSKSIGNGVQFLNRHLSSKLFHDKESMYPLLNFLRAHNYKGMTMMLNDRIRSLSALQGALRKAEEHLSTLQADTPYSEFHHRFQELGLEKGWGDCAKRAQETIHLLLDLLEAPDPSTLEKFLGTIPMVFNVVILSPHGYFAQANVLGYPDTGGQVVYILDQVRAMENEMLLRIKQCGLDITPKILIVTRLLPDATGTTCGQRLEKVLGTEHCHILRVPFRTENGIVRKWISRFEVWPYLETYTDDVAHEIAGELQANPDLIIGNYSDGNLVACLLAHKMGVTHCTIAHALEKTKYPNSDLYWKKFEDHYHFSCQFTTDLIAMNHADFIITSTFQEIAGNKDTVGQYESHMAFTMPGLYRVVHGIDVFDPKFNIVSPGADLSIYFPYTESHKRLTSLHPEIEELLYSQTENTEHKFVLNDRNKPIIFSMARLDRVKNLTGLVELYGRNKRLQELVNLVVVCGDHGNPSKDKEEQAEFKKMFDLIEQYNLNGHIRWISAQMNRVRNGELYRYICDTKGAFVQPAFYEAFGLTVVEAMTCGLPTFATAYGGPAEIIVHGVSGYHIDPYQGDKASALLVDFFDKCQAEPSHWSKISQGGLQRIEEKYTWKLYSERLMTLTGVYGFWKYVSNLERRETRRYLEMLYALKYRTMASTVPLAVEGEPSSK.

Ser-15 is modified (phosphoserine). Positions 280 to 757 (MVFNVVILSP…GLQRIEEKYT (478 aa)) are GT-B glycosyltransferase.

It belongs to the glycosyltransferase 1 family. Plant sucrose synthase subfamily.

It catalyses the reaction an NDP-alpha-D-glucose + D-fructose = a ribonucleoside 5'-diphosphate + sucrose + H(+). Functionally, sucrose-cleaving enzyme that provides UDP-glucose and fructose for various metabolic pathways. The polypeptide is Sucrose synthase 2 (SUS1) (Zea mays (Maize)).